Here is a 476-residue protein sequence, read N- to C-terminus: Proline--tRNA ligase (476 aa).

This sequence belongs to the class-II aminoacyl-tRNA synthetase family. ProS type 3 subfamily. In terms of assembly, homodimer.

The protein resides in the cytoplasm. The catalysed reaction is tRNA(Pro) + L-proline + ATP = L-prolyl-tRNA(Pro) + AMP + diphosphate. Catalyzes the attachment of proline to tRNA(Pro) in a two-step reaction: proline is first activated by ATP to form Pro-AMP and then transferred to the acceptor end of tRNA(Pro). The chain is Proline--tRNA ligase from Mycoplasmopsis pulmonis (strain UAB CTIP) (Mycoplasma pulmonis).